The following is a 207-amino-acid chain: Large ribosomal subunit protein uL4 (207 aa).

The interval 49-78 (HAVKNRSAVSGGGRKPWRQKGTGRARQGSI) is disordered.

This sequence belongs to the universal ribosomal protein uL4 family. Part of the 50S ribosomal subunit.

Its function is as follows. One of the primary rRNA binding proteins, this protein initially binds near the 5'-end of the 23S rRNA. It is important during the early stages of 50S assembly. It makes multiple contacts with different domains of the 23S rRNA in the assembled 50S subunit and ribosome. Functionally, forms part of the polypeptide exit tunnel. The chain is Large ribosomal subunit protein uL4 from Streptococcus equi subsp. zooepidemicus (strain H70).